A 216-amino-acid polypeptide reads, in one-letter code: Probable transaldolase (216 aa).

Catalysis depends on lysine 83, which acts as the Schiff-base intermediate with substrate.

The protein belongs to the transaldolase family. Type 3B subfamily.

The protein resides in the cytoplasm. The catalysed reaction is D-sedoheptulose 7-phosphate + D-glyceraldehyde 3-phosphate = D-erythrose 4-phosphate + beta-D-fructose 6-phosphate. The protein operates within carbohydrate degradation; pentose phosphate pathway; D-glyceraldehyde 3-phosphate and beta-D-fructose 6-phosphate from D-ribose 5-phosphate and D-xylulose 5-phosphate (non-oxidative stage): step 2/3. Its function is as follows. Transaldolase is important for the balance of metabolites in the pentose-phosphate pathway. The chain is Probable transaldolase from Sorangium cellulosum (strain So ce56) (Polyangium cellulosum (strain So ce56)).